Reading from the N-terminus, the 219-residue chain is GPI ethanolamine phosphate transferase, stabilizing subunit (219 aa).

Transmembrane regions (helical) follow at residues Y11–L31, T42–V62, Y86–I106, F113–P133, L155–L175, and T189–W209.

Belongs to the PIGF family. In terms of assembly, part of the ethanolamine phosphate transferase 3 complex composed by PIGO and PIGF. Part of the ethanolamine phosphate transferase 2 complex with PIGG. PIGF is required to stabilize PIGG and PIGO.

The protein resides in the endoplasmic reticulum membrane. Its pathway is glycolipid biosynthesis; glycosylphosphatidylinositol-anchor biosynthesis. Functionally, stabilizing subunit of the ethanolamine phosphate transferase 3 and ethanolamine phosphate transferase 2 complexes that sequentially transfer an ethanolamine phosphate (EtNP) from a phosphatidylethanolamine (PE) to the 6-OH position of the third alpha-1,2-linked mannose and the second alpha-1,6-linked mannose of the alpha-D-Man-(1-&gt;2)-alpha-D-Man-(1-&gt;6)-2-PEtn-alpha-D-Man-(1-&gt;4)-alpha-D-GlcN-(1-&gt;6)-(1-radyl,2-acyl-sn-glycero-3-phospho)-2-acyl-inositol (also termed H6) intermediate to generate a 6-PEtn-alpha-D-Man-(1-&gt;2)-6-PEtn-alpha-D-Man-(1-&gt;6)-2-PEtn-alpha-D-Man-(1-&gt;4)-alpha-D-GlcN-(1-&gt;6)-(1-radyl,2-acyl-sn-glycero-3-phospho)-2-acyl-inositol (also termed H8). Participates in the tenth and eleventh steps of the glycosylphosphatidylinositol-anchor biosynthesis, in association with PIGO and PIGG, respectively. This is GPI ethanolamine phosphate transferase, stabilizing subunit from Homo sapiens (Human).